Consider the following 365-residue polypeptide: c-di-GMP synthase (365 aa).

It belongs to the CD-NTase family. E subfamily.

The enzyme catalyses 2 GTP = 3',3'-c-di-GMP + 2 diphosphate. Functionally, cyclic nucleotide synthase (second messenger synthase) of a CBASS antivirus system. CBASS (cyclic oligonucleotide-based antiphage signaling system) provides immunity against bacteriophage. The CD-NTase protein synthesizes cyclic nucleotides in response to infection; these serve as specific second messenger signals. The signals activate a diverse range of effectors, leading to bacterial cell death and thus abortive phage infection. A type I-D(GG) CBASS system. Cyclic dinucleotide synthase that catalyzes the synthesis of c-di-GMP, has no activity with other NTP substrates. The protein is c-di-GMP synthase of Flavobacteriaceae sp. genome_bin_11.